The chain runs to 206 residues: Large ribosomal subunit protein uL4 (206 aa).

The tract at residues 48-75 (TQSAKTRAEVSGGGIKPWRQKGTGRARQ) is disordered.

This sequence belongs to the universal ribosomal protein uL4 family. In terms of assembly, part of the 50S ribosomal subunit.

In terms of biological role, one of the primary rRNA binding proteins, this protein initially binds near the 5'-end of the 23S rRNA. It is important during the early stages of 50S assembly. It makes multiple contacts with different domains of the 23S rRNA in the assembled 50S subunit and ribosome. Forms part of the polypeptide exit tunnel. This is Large ribosomal subunit protein uL4 from Clostridium botulinum (strain Loch Maree / Type A3).